Consider the following 773-residue polypeptide: Carnitine O-palmitoyltransferase 1, liver isoform (773 aa).

Position 2 is an N-acetylalanine (Ala2). The Cytoplasmic portion of the chain corresponds to 2–47 (AEAHQAVAFQFTVTPDGIDLRLSHEALRQIYLSGLHSWKKKFIRFK). A helical membrane pass occupies residues 48-73 (NGIITGVYPASPSSWLIVVVGVMTTM). Residues 74 to 102 (YAKIDPSLGIIAKINRTLETANCMSSQTK) lie on the Mitochondrial intermembrane side of the membrane. The chain crosses the membrane as a helical span at residues 103 to 122 (NVVSGVLFGTGLWVALIVTM). The Cytoplasmic portion of the chain corresponds to 123 to 773 (RYSLKVLLSY…LFGLSSNSKK (651 aa)). Tyr282 carries the 3'-nitrotyrosine modification. The active-site Proton acceptor is His473. Position 555 to 567 (555 to 567 (GKGIIKKCRTSPD)) interacts with CoA. Thr588 is modified (phosphothreonine). Tyr589 carries the 3'-nitrotyrosine modification. Positions 589 and 602 each coordinate (R)-carnitine. A Phosphothreonine modification is found at Thr604. Phosphoserine is present on residues Ser741 and Ser747.

The protein belongs to the carnitine/choline acetyltransferase family. As to quaternary structure, homohexamer and homotrimer. Identified in a complex that contains at least CPT1A, ACSL1 and VDAC1. Also identified in complexes with ACSL1 and VDAC2 and VDAC3. Interacts with ZDHHC4. In terms of tissue distribution, strong expression in kidney and heart, and lower in liver and skeletal muscle.

It localises to the mitochondrion outer membrane. It catalyses the reaction (R)-carnitine + hexadecanoyl-CoA = O-hexadecanoyl-(R)-carnitine + CoA. The catalysed reaction is succinyl-CoA + L-lysyl-[protein] = N(6)-succinyl-L-lysyl-[protein] + CoA + H(+). It functions in the pathway lipid metabolism; fatty acid beta-oxidation. Its activity is regulated as follows. Inhibited by malonyl-CoA. In terms of biological role, catalyzes the transfer of the acyl group of long-chain fatty acid-CoA conjugates onto carnitine, an essential step for the mitochondrial uptake of long-chain fatty acids and their subsequent beta-oxidation in the mitochondrion. Also possesses a lysine succinyltransferase activity that can regulate enzymatic activity of substrate proteins such as ENO1 and metabolism independent of its classical carnitine O-palmitoyltransferase activity. Plays an important role in hepatic triglyceride metabolism. Also plays a role in inducible regulatory T-cell (iTreg) differentiation once activated by butyryl-CoA that antagonizes malonyl-CoA-mediated CPT1A repression. Sustains the IFN-I response by recruiting ZDHCC4 to palmitoylate MAVS at the mitochondria leading to MAVS stabilization and activation. Promotes ROS-induced oxidative stress in liver injury via modulation of NFE2L2 and NLRP3-mediated signaling pathways. This is Carnitine O-palmitoyltransferase 1, liver isoform from Homo sapiens (Human).